Reading from the N-terminus, the 323-residue chain is tRNA U34 carboxymethyltransferase (323 aa).

Carboxy-S-adenosyl-L-methionine is bound by residues K91, W105, K110, G130, 152–154, 181–182, M196, Y200, and R315; these read DPS and IE.

This sequence belongs to the class I-like SAM-binding methyltransferase superfamily. CmoB family. As to quaternary structure, homotetramer.

It carries out the reaction carboxy-S-adenosyl-L-methionine + 5-hydroxyuridine(34) in tRNA = 5-carboxymethoxyuridine(34) in tRNA + S-adenosyl-L-homocysteine + H(+). Its function is as follows. Catalyzes carboxymethyl transfer from carboxy-S-adenosyl-L-methionine (Cx-SAM) to 5-hydroxyuridine (ho5U) to form 5-carboxymethoxyuridine (cmo5U) at position 34 in tRNAs. The sequence is that of tRNA U34 carboxymethyltransferase from Vibrio atlanticus (strain LGP32) (Vibrio splendidus (strain Mel32)).